A 117-amino-acid polypeptide reads, in one-letter code: Transcription elongation factor SPT4-B (117 aa).

The interaction with SUPT5H stretch occupies residues 1–40 (MALETVPKDLRHLRACLLCSLVKTIDQFEYDGCDNCDAYL). A C4-type zinc finger spans residues 16-36 (CLLCSLVKTIDQFEYDGCDNC).

This sequence belongs to the SPT4 family. In terms of assembly, interacts with SUPT5H to form DSIF. DSIF interacts with the positive transcription elongation factor b complex (P-TEFb complex), which is composed of CDK9 and cyclin-T (CCNT1 or CCNT2). DSIF interacts with RNA polymerase II, and this interaction is reduced by phosphorylation of the C-terminal domain (CTD) of POLR2A by P-TEFb. DSIF also interacts with the NELF complex, which is composed of WHSC2/NELFA, COBRA1/NELFB, TH1L/NELFD and RDBP/NELFE, and this interaction occurs following prior binding of DSIF to RNA polymerase II. DSIF also interacts with HRMT1L2/PRMT1, HTATSF1/TATSF1, RNGTT/CAP1A, SKB1/PRMT5, SUPT6H, and can interact with PIN1. Post-translationally, ubiquitinated by Ubr5 when not assembled in the DSIF complex, leading to its degradation: Ubr5 recognizes and binds a degron that is not accessible when Supt4h1b is part of the DSIF complex. In terms of tissue distribution, expressed in brain, heart and liver.

The protein resides in the nucleus. In terms of biological role, component of the DRB sensitivity-inducing factor complex (DSIF complex), which regulates mRNA processing and transcription elongation by RNA polymerase II. DSIF positively regulates mRNA capping by stimulating the mRNA guanylyltransferase activity of RNGTT/CAP1A. DSIF also acts cooperatively with the negative elongation factor complex (NELF complex) to enhance transcriptional pausing at sites proximal to the promoter. Transcriptional pausing may facilitate the assembly of an elongation competent RNA polymerase II complex. DSIF and NELF promote pausing by inhibition of the transcription elongation factor TFIIS/S-II. TFIIS/S-II binds to RNA polymerase II at transcription pause sites and stimulates the weak intrinsic nuclease activity of the enzyme. Cleavage of blocked transcripts by RNA polymerase II promotes the resumption of transcription from the new 3' terminus and may allow repeated attempts at transcription through natural pause sites. This chain is Transcription elongation factor SPT4-B (Supt4h1b), found in Mus musculus (Mouse).